A 496-amino-acid chain; its full sequence is L-arabinose isomerase (496 aa).

Positions 305, 330, 347, and 446 each coordinate Mn(2+).

It belongs to the arabinose isomerase family. The cofactor is Mn(2+).

The catalysed reaction is beta-L-arabinopyranose = L-ribulose. The protein operates within carbohydrate degradation; L-arabinose degradation via L-ribulose; D-xylulose 5-phosphate from L-arabinose (bacterial route): step 1/3. Catalyzes the conversion of L-arabinose to L-ribulose. In Bacillus subtilis (strain 168), this protein is L-arabinose isomerase.